The sequence spans 164 residues: Large ribosomal subunit protein eL24 (164 aa).

Disordered stretches follow at residues 63 to 82 and 117 to 164; these read KDAA…KPYS and ERIK…GGKA. Residues 71 to 81 are compositionally biased toward basic residues; that stretch reads KKRRRATKKPY. Residues 117 to 133 show a composition bias toward basic and acidic residues; sequence ERIKKTKDEKKAKKAEV.

The protein belongs to the eukaryotic ribosomal protein eL24 family.

The protein localises to the cytoplasm. This Cicer arietinum (Chickpea) protein is Large ribosomal subunit protein eL24 (RPL24).